We begin with the raw amino-acid sequence, 165 residues long: MKRVLFSVIVFTAVGFTFCQSKAHALTFTVLPITQKTDQWSVKVSEAKNVKEFTRPHKGEYQVYSLEVKNIGEKAATVDVQLYRNDPNSITRFSLFGCPDENCVKPKEDSKMLAESLNDGSPLKFNHFMLADKASELEVVIIWTQKGQEGRNLKQTFKFTEDGVN.

The first 25 residues, 1–25 (MKRVLFSVIVFTAVGFTFCQSKAHA), serve as a signal peptide directing secretion.

This is an uncharacterized protein from Bacillus subtilis (strain 168).